A 108-amino-acid polypeptide reads, in one-letter code: MSSAQFDHVTVIKKSNVYFGGLCISHTVQFEDGTKKTLGVILPTEQPLTFETHVPERMEIISGECRVKIADSTESELFRAGQSFYVPGNSLFKIETDEVLDYVCHLEG.

Belongs to the nucleoside phosphorylase PpnP family.

It carries out the reaction a purine D-ribonucleoside + phosphate = a purine nucleobase + alpha-D-ribose 1-phosphate. The enzyme catalyses adenosine + phosphate = alpha-D-ribose 1-phosphate + adenine. The catalysed reaction is cytidine + phosphate = cytosine + alpha-D-ribose 1-phosphate. It catalyses the reaction guanosine + phosphate = alpha-D-ribose 1-phosphate + guanine. It carries out the reaction inosine + phosphate = alpha-D-ribose 1-phosphate + hypoxanthine. The enzyme catalyses thymidine + phosphate = 2-deoxy-alpha-D-ribose 1-phosphate + thymine. The catalysed reaction is uridine + phosphate = alpha-D-ribose 1-phosphate + uracil. It catalyses the reaction xanthosine + phosphate = alpha-D-ribose 1-phosphate + xanthine. Its function is as follows. Catalyzes the phosphorolysis of diverse nucleosides, yielding D-ribose 1-phosphate and the respective free bases. Can use uridine, adenosine, guanosine, cytidine, thymidine, inosine and xanthosine as substrates. Also catalyzes the reverse reactions. This chain is Pyrimidine/purine nucleoside phosphorylase, found in Acinetobacter baylyi (strain ATCC 33305 / BD413 / ADP1).